Reading from the N-terminus, the 572-residue chain is Proline--tRNA ligase (572 aa).

Belongs to the class-II aminoacyl-tRNA synthetase family. ProS type 1 subfamily. Homodimer.

Its subcellular location is the cytoplasm. It catalyses the reaction tRNA(Pro) + L-proline + ATP = L-prolyl-tRNA(Pro) + AMP + diphosphate. Functionally, catalyzes the attachment of proline to tRNA(Pro) in a two-step reaction: proline is first activated by ATP to form Pro-AMP and then transferred to the acceptor end of tRNA(Pro). As ProRS can inadvertently accommodate and process non-cognate amino acids such as alanine and cysteine, to avoid such errors it has two additional distinct editing activities against alanine. One activity is designated as 'pretransfer' editing and involves the tRNA(Pro)-independent hydrolysis of activated Ala-AMP. The other activity is designated 'posttransfer' editing and involves deacylation of mischarged Ala-tRNA(Pro). The misacylated Cys-tRNA(Pro) is not edited by ProRS. In Buchnera aphidicola subsp. Acyrthosiphon pisum (strain APS) (Acyrthosiphon pisum symbiotic bacterium), this protein is Proline--tRNA ligase.